A 334-amino-acid polypeptide reads, in one-letter code: Nucleoid-associated protein ESA_01050 (334 aa).

This sequence belongs to the YejK family.

The protein localises to the cytoplasm. It is found in the nucleoid. The polypeptide is Nucleoid-associated protein ESA_01050 (Cronobacter sakazakii (strain ATCC BAA-894) (Enterobacter sakazakii)).